The following is an 82-amino-acid chain: Neuromacin (82 aa).

The first 23 residues, 1 to 23 (MALLNKLLCFALVFMIFGEFVTP), serve as a signal peptide directing secretion. Disulfide bonds link Cys25-Cys32, Cys47-Cys51, Cys61-Cys69, and Cys79-Cys81.

This sequence belongs to the macin family.

Its subcellular location is the secreted. The sequence is that of Neuromacin from Hirudo medicinalis (Medicinal leech).